The primary structure comprises 104 residues: UPF0473 protein LGAS_0424 (104 aa).

Belongs to the UPF0473 family.

This Lactobacillus gasseri (strain ATCC 33323 / DSM 20243 / BCRC 14619 / CIP 102991 / JCM 1131 / KCTC 3163 / NCIMB 11718 / NCTC 13722 / AM63) protein is UPF0473 protein LGAS_0424.